The sequence spans 101 residues: MPEITTKPRTKVKPQTERPKLYKVILINDDFTPREFVVTVLKGEFKLSEDQAHRIMITAHRRGVCVVAVFTKDVAETKATRATDAGKAKGYPLLFTTEPEE.

Belongs to the ClpS family. As to quaternary structure, binds to the N-terminal domain of the chaperone ClpA.

Functionally, involved in the modulation of the specificity of the ClpAP-mediated ATP-dependent protein degradation. This chain is ATP-dependent Clp protease adapter protein ClpS 2, found in Mesorhizobium japonicum (strain LMG 29417 / CECT 9101 / MAFF 303099) (Mesorhizobium loti (strain MAFF 303099)).